Reading from the N-terminus, the 735-residue chain is Dolichyl-diphosphooligosaccharide--protein glycosyltransferase subunit STT3B (735 aa).

Over 1–38 (MGGKSEPAKSESMATKPDLLNTSFFSFKSLKLKTKQQE) the chain is Cytoplasmic. The chain crosses the membrane as a helical span at residues 39-59 (LLLRISILGLVYILAFIARLF). Residues 60-142 (SVLRYESMIH…VHIREVCVLT (83 aa)) lie on the Lumenal side of the membrane. The DXD motif 1 signature appears at 70 to 72 (EFD). Residue Asp-72 coordinates Mn(2+). A helical membrane pass occupies residues 143 to 161 (APFFASNTTLVAYFFGKEL). At 162–163 (WD) the chain is on the cytoplasmic side. A helical membrane pass occupies residues 164 to 181 (TGAGLVAAVLIAICPGYI). Topologically, residues 182-192 (SRSVAGSYDNE) are lumenal. Mn(2+)-binding residues include Asp-190 and Glu-192. The short motif at 190 to 192 (DNE) is the DXD motif 2 element. The helical transmembrane segment at 193–212 (AVAIFALLLTFYLFVKAVNT) threads the bilayer. At 213–214 (GS) the chain is on the cytoplasmic side. A helical membrane pass occupies residues 215-229 (LAWALASAFGYFYMV). The Lumenal portion of the chain corresponds to 230-234 (SAWGG). The chain crosses the membrane as a helical span at residues 235–251 (YVFIINLVPLYVLVLLI). Over 252-256 (TGRYS) the chain is Cytoplasmic. Residues 257 to 282 (MRLYIAYNCMYILGMLLAMQIRFVGF) form a helical membrane-spanning segment. At 283–290 (QHVQSGEH) the chain is on the lumenal side. The helical transmembrane segment at 291–310 (MGAMGVFLLMQVFYFLDWVK) threads the bilayer. The Cytoplasmic portion of the chain corresponds to 311-326 (YQLNDTKLFQTFLRIT). A helical membrane pass occupies residues 327–347 (VTSAILVGGVAVGVGTASGYI). Residues 348–380 (SPWTGRFYSLLDPTYAKDHIPIIASVSEHQPTA) are Lumenal-facing. Residues 372–375 (SVSE) carry the SVSE motif motif. A helical membrane pass occupies residues 381-403 (WSSFMFDYHILLFLFPAGLYFCF). Topologically, residues 404 to 409 (KRLTDA) are cytoplasmic. A helical transmembrane segment spans residues 410–426 (TIFIVMYGLTSLYFAGV). Residues 427–430 (MVRL) are Lumenal-facing. Position 429 (Arg-429) interacts with dolichyl diphosphooligosaccharide. A helical transmembrane segment spans residues 431–452 (ILVATPAVCLISAIAVSATIKN). The Cytoplasmic portion of the chain corresponds to 453 to 494 (LTSLLRTKQKVSQTGSTKGAGSSKASSKVTLDQSQPFQKNGA). The chain crosses the membrane as a helical span at residues 495-515 (IALLVGVFYLLSRYAIHCTWV). The Lumenal segment spans residues 516 to 735 (TAEAYSSPSI…YRVKPPTNRL (220 aa)). The interacts with target acceptor peptide in protein substrate stretch occupies residues 562–564 (WWD). A WWDYG motif motif is present at residues 562–566 (WWDYG). Tyr-567 contacts dolichyl diphosphooligosaccharide. Residues Asn-574 and Asn-581 are each glycosylated (N-linked (GlcNAc...) asparagine). Residue Asn-585 is glycosylated (N-linked (GlcNAc...) (high mannose) asparagine). A DK motif motif is present at residues 629 to 636 (DINKFLWM).

Belongs to the STT3 family. Component of the oligosaccharyltransferase (OST) complex. Requires Mg(2+) as cofactor. Mn(2+) serves as cofactor. Expressed preferentially in the root but also in the shoot.

The protein resides in the endoplasmic reticulum membrane. It carries out the reaction a di-trans,poly-cis-dolichyl diphosphooligosaccharide + L-asparaginyl-[protein] = N(4)-(oligosaccharide-(1-&gt;4)-N-acetyl-beta-D-glucosaminyl-(1-&gt;4)-N-acetyl-beta-D-glucosaminyl)-L-asparaginyl-[protein] + a di-trans,poly-cis-dolichyl diphosphate + H(+). Its pathway is protein modification; protein glycosylation. Its function is as follows. Catalytic subunit of the oligosaccharyl transferase (OST) complex that catalyzes the initial transfer of a defined glycan (Glc(3)Man(9)GlcNAc(2) in eukaryotes) from the lipid carrier dolichol-pyrophosphate to an asparagine residue within an Asn-X-Ser/Thr consensus motif in nascent polypeptide chains, the first step in protein N-glycosylation. N-glycosylation occurs cotranslationally and the complex associates with the Sec61 complex at the channel-forming translocon complex that mediates protein translocation across the endoplasmic reticulum (ER). All subunits are required for a maximal enzyme activity. This subunit contains the active site and the acceptor peptide and donor lipid-linked oligosaccharide (LLO) binding pockets. The chain is Dolichyl-diphosphooligosaccharide--protein glycosyltransferase subunit STT3B (STT3B) from Arabidopsis thaliana (Mouse-ear cress).